A 261-amino-acid chain; its full sequence is Putative [LysW]-aminoadipate/[LysW]-glutamate kinase (261 aa).

Substrate is bound by residues 35 to 36, Arg-62, and Asn-162; that span reads GG.

It belongs to the acetylglutamate kinase family. LysZ subfamily.

It localises to the cytoplasm. It catalyses the reaction [amino-group carrier protein]-C-terminal-N-(1,4-dicarboxybutan-1-yl)-L-glutamine + ATP = [amino-group carrier protein]-C-terminal-N-(1-carboxy-5-phosphooxy-5-oxopentan-1-yl)-L-glutamine + ADP. It carries out the reaction [amino-group carrier protein]-C-terminal-gamma-(L-glutamyl)-L-glutamate + ATP = [amino-group carrier protein]-C-terminal-gamma-(5-phospho-L-glutamyl)-L-glutamate + ADP. The protein operates within amino-acid biosynthesis; L-lysine biosynthesis via AAA pathway; L-lysine from L-alpha-aminoadipate (Thermus route): step 2/5. Its pathway is amino-acid biosynthesis; L-arginine biosynthesis. Functionally, involved in both the arginine and lysine biosynthetic pathways. Phosphorylates the LysW-bound precursors glutamate (for arginine biosynthesis), respectively alpha-aminoadipate (for lysine biosynthesis). This chain is Putative [LysW]-aminoadipate/[LysW]-glutamate kinase, found in Pyrobaculum islandicum (strain DSM 4184 / JCM 9189 / GEO3).